The chain runs to 204 residues: N-(5'-phosphoribosyl)anthranilate isomerase (204 aa).

Belongs to the TrpF family.

It carries out the reaction N-(5-phospho-beta-D-ribosyl)anthranilate = 1-(2-carboxyphenylamino)-1-deoxy-D-ribulose 5-phosphate. It participates in amino-acid biosynthesis; L-tryptophan biosynthesis; L-tryptophan from chorismate: step 3/5. In Bacillus cereus (strain ZK / E33L), this protein is N-(5'-phosphoribosyl)anthranilate isomerase.